Consider the following 246-residue polypeptide: MKYTVDTHTHTVASTHAYSTIHDYLPIARARGIKLFATTDHGPDMADAPHFWHFVNLHVLPRVVDGVGILRGIEANIKNIDGEIDFPVRYESRLDMIMAGFHEPVFPPCDQATHTQAMINAIRSGRVDMISHPGNPAFPIDIQAVVKAAAQYRVALELNNSSFSHSRPGSENNCGAIVEAARDLGAYLTFGSDSHVAFSLGNFEHCHRLVTEAHFPEDRILARSPRALLDFLESRGRAHIPEFADL.

The Zn(2+) site is built by H8, H10, H16, H41, E74, H102, H132, D193, and H195.

It belongs to the PHP family. Zn(2+) serves as cofactor.

The chain is Probable phosphatase ASA_1316 from Aeromonas salmonicida (strain A449).